The primary structure comprises 1249 residues: Myosin-1 (1249 aa).

Residues 1-40 (MGHSRRPAGGEKKSRFGRSKAAADVGDGRQAGGKPQVRKA) are disordered. The region spanning 50–729 (IGVSDLTLLS…TLFALEAMRD (680 aa)) is the Myosin motor domain. ATP is bound at residue 143-150 (GESGAGKT). Phosphoserine is present on serine 371. Residues 418 to 500 (SIGILDIYGF…PGVFAALNDA (83 aa)) are actin-binding. 2 IQ domains span residues 733-753 (HNMA…RTEC) and 754-779 (AIRI…QGHT). A TH1 domain is found at 787 to 979 (RRRMSILGSR…PGEPPNSVSK (193 aa)). Disordered stretches follow at residues 959-1081 (DSYK…KAKA) and 1127-1249 (EAYL…DDDW). Low complexity-rich tracts occupy residues 1026-1035 (PQTAAAQPTP) and 1043-1061 (PVAA…ASAR). Residues 1062–1073 (APPPPPPAPPAA) show a composition bias toward pro residues. The 62-residue stretch at 1074–1135 (AGPKKAKALY…PEAYLEEQVA (62 aa)) folds into the SH3 domain. The span at 1137 to 1149 (TPKPAPPPPPPVA) shows a compositional bias: pro residues. Over residues 1150 to 1170 (PRASPAPVNGSAAVAAAKAKA) the composition is skewed to low complexity. Positions 1199–1221 (VSMNSQGDSSGASGRGTPSSVSN) are enriched in polar residues. Positions 1222–1235 (ASLAGGLAEALRAR) are enriched in low complexity.

The protein belongs to the TRAFAC class myosin-kinesin ATPase superfamily. Myosin family. As to quaternary structure, interacts (via IQ domains) with camA. Post-translationally, phosphorylation of the TEDS site (Ser-371) is required for the polarization of the actin cytoskeleton. Phosphorylation probably activates the myosin-I ATPase activity.

Its subcellular location is the cytoplasm. It is found in the cytoskeleton. It localises to the actin patch. Its function is as follows. Type-I myosin implicated in the organization of the actin cytoskeleton. Required for proper actin cytoskeleton polarization. At the cell cortex, assembles in patch-like structures together with proteins from the actin-polymerizing machinery and promotes actin assembly. Functions as actin nucleation-promoting factor (NPF) for the Arp2/3 complex. Plays an important role in polarized growth, spore germination, hyphal morphogenesis, and septal wall formation. This Emericella nidulans (strain FGSC A4 / ATCC 38163 / CBS 112.46 / NRRL 194 / M139) (Aspergillus nidulans) protein is Myosin-1 (myoA).